A 263-amino-acid polypeptide reads, in one-letter code: Benzil reductase ((S)-benzoin forming) IRC24 (263 aa).

NADP(+)-binding residues include Ile7 and Asn86. Catalysis depends on Ser143, which acts as the Proton donor. Residues Tyr157, Lys161, Val190, and Thr192 each coordinate NADP(+). Catalysis depends on Tyr157, which acts as the Proton acceptor. Lys161 acts as the Lowers pKa of active site Tyr in catalysis.

Belongs to the short-chain dehydrogenases/reductases (SDR) family.

It catalyses the reaction (S)-benzoin + NADP(+) = benzil + NADPH + H(+). The catalysed reaction is 2-hydroxy-1-phenyl-1-propanone + NADP(+) = 1-phenyl-1,2-propanedione + NADPH + H(+). In terms of biological role, reduces benzil stereospecifically to (S)-benzoin. Also reduces 1-phenyl-1,2-propanedione to 2-hydroxy-1-phenyl-1-propanone. Is probably involved in a pathway contributing to genomic integrity. The polypeptide is Benzil reductase ((S)-benzoin forming) IRC24 (IRC24) (Saccharomyces cerevisiae (strain ATCC 204508 / S288c) (Baker's yeast)).